A 793-amino-acid chain; its full sequence is MPAGPVQAVPPPPPVPTEPKQPTEEEASSKEDSAPSKPVVGIIYPPPEVRNIVDKTASFVARNGPEFEARIRQNEINNPKFNFLNPNDPYHAYYRHKVSEFKEGKAQEPSAAIPKVMQQQQQTTQQQLPQKVQAQVIQETIVPKEPPPEFEFIADPPSISAFDLDVVKLTAQFVARNGRQFLTQLMQKEQRNYQFDFLRPQHSLFNYFTKLVEQYTKILIPPKGLFSKLKKEAENPREVLDQVCYRVEWAKFQERERKKEEEEKEKERVAYAQIDWHDFVVVETVDFQPNEQGNFPPPTTPEELGARILIQERYEKFGESEEVEMEVESDEEDDKQEKAEEPPSQLDQDTQVQDMDEGSDDEEEGQKVPPPPETPMPPPLPPTPDQVIVRKDYDPKASKPLPPAPAPDEYLVSPITGEKIPASKMQEHMRIGLLDPRWLEQRDRSIREKQSDDEVYAPGLDIESSLKQLAERRTDIFGVEETAIGKKIGEEEIQKPEEKVTWDGHSGSMARTQQAAQANITLQEQIEAIHKAKGLVPEDDTKEKIGPSKPNEIPQQPPPPSSATNIPSSAPPITSVPRPPTMPPPVRTTVVSAVPVMPRPPMASVVRLPPGSVIAPMPPIIHAPRINVVPMPPSAPPIMAPRPPPMIVPTAFVPAPPVAPVPAPAPMPPVHPPPPMEDEPTSKKLKTEDSLMPEEEFLRRNKGPVSIKVQVPNMQDKTEWKLNGQVLVFTLPLTDQVSVIKVKIHEATGMPAGKQKLQYEGIFIKDSNSLAYYNMANGAVIHLALKERGGRKK.

A disordered region spans residues 1–43 (MPAGPVQAVPPPPPVPTEPKQPTEEEASSKEDSAPSKPVVGII). Over residues 8–19 (AVPPPPPVPTEP) the composition is skewed to pro residues. A Glycyl lysine isopeptide (Lys-Gly) (interchain with G-Cter in SUMO2) cross-link involves residue Lys20. The segment covering 21–34 (QPTEEEASSKEDSA) has biased composition (basic and acidic residues). The SURP motif 1 repeat unit spans residues 52–94 (IVDKTASFVARNGPEFEARIRQNEINNPKFNFLNPNDPYHAYY). Lys55 bears the N6-acetyllysine mark. A Glycyl lysine isopeptide (Lys-Gly) (interchain with G-Cter in SUMO2) cross-link involves residue Lys131. One copy of the SURP motif 2 repeat lies at 166 to 208 (VVKLTAQFVARNGRQFLTQLMQKEQRNYQFDFLRPQHSLFNYF). Positions 318–428 (GESEEVEMEV…KIPASKMQEH (111 aa)) are disordered. Residues Ser320, Ser329, and Ser359 each carry the phosphoserine modification. 2 stretches are compositionally biased toward acidic residues: residues 320–334 (SEEVEMEVESDEEDD) and 354–364 (DMDEGSDDEEE). A compositionally biased stretch (pro residues) spans 368-384 (VPPPPETPMPPPLPPTP). Residues 388–397 (IVRKDYDPKA) show a composition bias toward basic and acidic residues. A Phosphoserine modification is found at Ser413. Residue Lys424 forms a Glycyl lysine isopeptide (Lys-Gly) (interchain with G-Cter in SUMO2) linkage. At Ser451 the chain carries Phosphoserine. Tyr456 is subject to Phosphotyrosine. A compositionally biased stretch (basic and acidic residues) spans 488–502 (IGEEEIQKPEEKVTW). Disordered stretches follow at residues 488-518 (IGEEEIQKPEEKVTWDGHSGSMARTQQAAQA), 530-584 (HKAK…TMPP), and 665-688 (APMPPVHPPPPMEDEPTSKKLKTE). A Glycyl lysine isopeptide (Lys-Gly) (interchain with G-Cter in SUMO2) cross-link involves residue Lys499. Phosphoserine is present on Ser508. The segment covering 509–518 (MARTQQAAQA) has biased composition (polar residues). Lys542 participates in a covalent cross-link: Glycyl lysine isopeptide (Lys-Gly) (interchain with G-Cter in SUMO2). Over residues 665 to 675 (APMPPVHPPPP) the composition is skewed to pro residues. Residues 680-702 (PTSKKLKTEDSLMPEEEFLRRNK) are required and sufficient for nuclear import. A Glycyl lysine isopeptide (Lys-Gly) (interchain with G-Cter in SUMO2) cross-link involves residue Lys686. Positions 707-793 (IKVQVPNMQD…ALKERGGRKK (87 aa)) constitute a Ubiquitin-like domain. Tyr759 is modified (phosphotyrosine).

As to quaternary structure, component of the 17S U2 SnRNP complex, a ribonucleoprotein complex that contains small nuclear RNA (snRNA) U2 and a number of specific proteins. Part of the SF3A subcomplex of the 17S U2 SnRNP complex which is composed of three subunits; SF3A3/SAP61, SF3A2/SAP62 and SF3A1/SAP114. SF3A associates with the splicing factor SF3B and a 12S RNA unit to form the mature 17S U2 small nuclear ribonucleoprotein complex (17S U2 snRNP). SF3A1 functions as a scaffold that interacts directly with both SF3A2 and SF3A3. Identified in the spliceosome 'E' complex, a precursor of the spliceosome 'A' complex. Identified in the spliceosome 'A' and 'B' complexes. Identified in the spliceosome 'C' complex. Interacts with P2RX6; resulting in a reduction of the splicing activity. As to expression, ubiquitously expressed.

The protein localises to the nucleus. Its subcellular location is the nucleus speckle. In terms of biological role, component of the 17S U2 SnRNP complex of the spliceosome, a large ribonucleoprotein complex that removes introns from transcribed pre-mRNAs. The 17S U2 SnRNP complex (1) directly participates in early spliceosome assembly and (2) mediates recognition of the intron branch site during pre-mRNA splicing by promoting the selection of the pre-mRNA branch-site adenosine, the nucleophile for the first step of splicing. Within the 17S U2 SnRNP complex, SF3A1 is part of the SF3A subcomplex that contributes to the assembly of the 17S U2 snRNP, and the subsequent assembly of the pre-spliceosome 'E' complex and the pre-catalytic spliceosome 'A' complex. Involved in pre-mRNA splicing as a component of pre-catalytic spliceosome 'B' complexes. The polypeptide is Splicing factor 3A subunit 1 (SF3A1) (Homo sapiens (Human)).